A 465-amino-acid polypeptide reads, in one-letter code: ATP-dependent protease ATPase subunit HslU (465 aa).

ATP-binding positions include valine 19, 61–66 (GVGKTE), aspartate 277, glutamate 343, and arginine 415.

It belongs to the ClpX chaperone family. HslU subfamily. As to quaternary structure, a double ring-shaped homohexamer of HslV is capped on each side by a ring-shaped HslU homohexamer. The assembly of the HslU/HslV complex is dependent on binding of ATP.

Its subcellular location is the cytoplasm. ATPase subunit of a proteasome-like degradation complex; this subunit has chaperone activity. The binding of ATP and its subsequent hydrolysis by HslU are essential for unfolding of protein substrates subsequently hydrolyzed by HslV. HslU recognizes the N-terminal part of its protein substrates and unfolds these before they are guided to HslV for hydrolysis. The polypeptide is ATP-dependent protease ATPase subunit HslU (Geobacillus sp. (strain WCH70)).